The sequence spans 204 residues: Urease accessory protein UreG (204 aa).

Residue 13-20 coordinates GTP; sequence GPVGSGKT.

The protein belongs to the SIMIBI class G3E GTPase family. UreG subfamily. In terms of assembly, homodimer. UreD, UreF and UreG form a complex that acts as a GTP-hydrolysis-dependent molecular chaperone, activating the urease apoprotein by helping to assemble the nickel containing metallocenter of UreC. The UreE protein probably delivers the nickel.

It localises to the cytoplasm. Facilitates the functional incorporation of the urease nickel metallocenter. This process requires GTP hydrolysis, probably effectuated by UreG. The polypeptide is Urease accessory protein UreG (Acinetobacter baumannii (strain AB307-0294)).